We begin with the raw amino-acid sequence, 212 residues long: NAD(P)H-hydrate epimerase (212 aa).

In terms of domain architecture, YjeF N-terminal spans 11-212; that stretch reads MRHYDSYTIN…ANDMGTYAVD (202 aa). 60–64 is a (6S)-NADPHX binding site; sequence NNGGD. K(+) contacts are provided by N61 and D123. (6S)-NADPHX contacts are provided by residues 127–133, Y138, and D156; that span reads GIGIDRA. S159 serves as a coordination point for K(+).

The protein belongs to the NnrE/AIBP family. The cofactor is K(+).

The catalysed reaction is (6R)-NADHX = (6S)-NADHX. The enzyme catalyses (6R)-NADPHX = (6S)-NADPHX. Its function is as follows. Catalyzes the epimerization of the S- and R-forms of NAD(P)HX, a damaged form of NAD(P)H that is a result of enzymatic or heat-dependent hydration. This is a prerequisite for the S-specific NAD(P)H-hydrate dehydratase to allow the repair of both epimers of NAD(P)HX. The protein is NAD(P)H-hydrate epimerase of Limosilactobacillus reuteri (strain ATCC 55730 / SD2112) (Lactobacillus reuteri).